Consider the following 252-residue polypeptide: 3-dehydroquinate dehydratase (252 aa).

Residues 46–48 (EWR) and Arg-82 contribute to the 3-dehydroquinate site. His-143 (proton donor/acceptor) is an active-site residue. Lys-170 acts as the Schiff-base intermediate with substrate in catalysis. Residues Arg-212, Ser-231, and Gln-235 each contribute to the 3-dehydroquinate site.

This sequence belongs to the type-I 3-dehydroquinase family. In terms of assembly, homodimer.

It catalyses the reaction 3-dehydroquinate = 3-dehydroshikimate + H2O. It functions in the pathway metabolic intermediate biosynthesis; chorismate biosynthesis; chorismate from D-erythrose 4-phosphate and phosphoenolpyruvate: step 3/7. Its function is as follows. Involved in the third step of the chorismate pathway, which leads to the biosynthesis of aromatic amino acids. Catalyzes the cis-dehydration of 3-dehydroquinate (DHQ) and introduces the first double bond of the aromatic ring to yield 3-dehydroshikimate. The chain is 3-dehydroquinate dehydratase from Listeria innocua serovar 6a (strain ATCC BAA-680 / CLIP 11262).